A 432-amino-acid polypeptide reads, in one-letter code: Enolase (432 aa).

Glutamine 167 lines the (2R)-2-phosphoglycerate pocket. Residue glutamate 209 is the Proton donor of the active site. Residues aspartate 246, glutamate 291, and aspartate 318 each contribute to the Mg(2+) site. 4 residues coordinate (2R)-2-phosphoglycerate: lysine 343, arginine 372, serine 373, and lysine 394. The Proton acceptor role is filled by lysine 343.

Belongs to the enolase family. In terms of assembly, component of the RNA degradosome, a multiprotein complex involved in RNA processing and mRNA degradation. Mg(2+) is required as a cofactor.

The protein localises to the cytoplasm. The protein resides in the secreted. Its subcellular location is the cell surface. It catalyses the reaction (2R)-2-phosphoglycerate = phosphoenolpyruvate + H2O. It participates in carbohydrate degradation; glycolysis; pyruvate from D-glyceraldehyde 3-phosphate: step 4/5. Its function is as follows. Catalyzes the reversible conversion of 2-phosphoglycerate (2-PG) into phosphoenolpyruvate (PEP). It is essential for the degradation of carbohydrates via glycolysis. The polypeptide is Enolase (Aliivibrio salmonicida (strain LFI1238) (Vibrio salmonicida (strain LFI1238))).